The primary structure comprises 650 residues: Tudor domain-containing protein 3 (650 aa).

The tract at residues 147 to 169 is disordered; it reads TKTFGGGGNAGSNLNPGAGGSRN. Residues 192 to 232 form the UBA domain; the sequence is LVDEKALRHITEMGFCKDAARQALMDHSNNVEAALNFLLTG. 3 disordered regions span residues 233–271, 286–406, and 427–447; these read SKPKVVQGPPPRGKGKGRGRTRGEEDDELTSARPSAPST, EDNK…SCNN, and HQNSTTEGSHQKRGKKDDQRY. Basic and acidic residues-rich tracts occupy residues 320-337 and 366-388; these read TRNDTRAPRNEKPPRFQK and HWMEDRNKCERGYPRNDRLKDFS. Residues 390 to 406 are compositionally biased toward polar residues; the sequence is PPSNHQNEGSYRKSCNN. Positions 554 to 614 constitute a Tudor domain; it reads SWRSGDECLA…RPIQAEAWEE (61 aa). The disordered stretch occupies residues 616–650; that stretch reads GEFGDSLDFRRGGDGQPRRSTRPTQQFYQPPRARN. The span at 622–632 shows a compositional bias: basic and acidic residues; that stretch reads LDFRRGGDGQP.

In terms of assembly, component of mRNA stress granules.

It is found in the cytoplasm. The protein resides in the nucleus. In terms of biological role, scaffolding protein that specifically recognizes and binds dimethylarginine-containing proteins. Plays a role in the regulation of translation of target mRNAs by binding Arg/Gly-rich motifs (GAR) in dimethylarginine-containing proteins. In nucleus, acts as a coactivator: recognizes and binds asymmetric dimethylation on the core histone tails associated with transcriptional activation (H3R17me2a and H4R3me2a) and recruits proteins at these arginine-methylated loci. In cytoplasm, acts as an antiviral factor that participates in the assembly of stress granules together with G3BP1. The sequence is that of Tudor domain-containing protein 3 (tdrd3) from Xenopus laevis (African clawed frog).